The following is a 396-amino-acid chain: Elongation factor Tu (396 aa).

Residues 10–206 (KPHVNVGTIG…ALDSYIPTPE (197 aa)) form the tr-type G domain. Residues 19–26 (GHVDHGKT) form a G1 region. GTP is bound at residue 19-26 (GHVDHGKT). Threonine 26 is a Mg(2+) binding site. Residues 60-64 (GITIN) are G2. A G3 region spans residues 81–84 (DCPG). GTP is bound by residues 81-85 (DCPGH) and 136-139 (NKCD). The interval 136–139 (NKCD) is G4. A G5 region spans residues 174 to 176 (SAL).

The protein belongs to the TRAFAC class translation factor GTPase superfamily. Classic translation factor GTPase family. EF-Tu/EF-1A subfamily. As to quaternary structure, monomer.

It is found in the cytoplasm. It catalyses the reaction GTP + H2O = GDP + phosphate + H(+). GTP hydrolase that promotes the GTP-dependent binding of aminoacyl-tRNA to the A-site of ribosomes during protein biosynthesis. This chain is Elongation factor Tu, found in Aromatoleum aromaticum (strain DSM 19018 / LMG 30748 / EbN1) (Azoarcus sp. (strain EbN1)).